The sequence spans 310 residues: Membrane protein insertase YidC 2 (310 aa).

An N-terminal signal peptide occupies residues 1 to 23 (MKKIYKRLLFSGLALSMLFFLSG). A lipid anchor (N-palmitoyl cysteine) is attached at Cys-24. Cys-24 carries S-diacylglycerol cysteine lipidation. 5 helical membrane-spanning segments follow: residues 34 to 54 (GEGWVYKFFAAPMGSVIQYLA), 57 to 77 (LGLGFGFAIIIVTVIVRLLIL), 136 to 156 (FGGLGCLPLLIQMPFFSALYI), 180 to 200 (IITVIIGILYLVQSWVSTLSV), and 220 to 240 (VMISIGAPAGGALYWLVSGIF). The disordered stretch occupies residues 263-310 (EFKKNPPKPFKSNARKDITPQANNDKKLITSKKQKSNRNAGKQRHHKQ). Residues 276–290 (ARKDITPQANNDKKL) show a composition bias toward basic and acidic residues. Residues 291-310 (ITSKKQKSNRNAGKQRHHKQ) show a composition bias toward basic residues.

The protein belongs to the OXA1/ALB3/YidC family. Type 2 subfamily.

It is found in the cell membrane. In terms of biological role, required for the insertion and/or proper folding and/or complex formation of integral membrane proteins into the membrane. Involved in integration of membrane proteins that insert both dependently and independently of the Sec translocase complex, as well as at least some lipoproteins. Partially complements an E.coli yidC depletion experiment. The sequence is that of Membrane protein insertase YidC 2 (yidC2) from Streptococcus mutans serotype c (strain ATCC 700610 / UA159).